The following is a 57-amino-acid chain: Large ribosomal subunit protein bL32 (57 aa).

The span at 1–20 (MAVPKKKTSKGKRNQRHAVW) shows a compositional bias: basic residues. A disordered region spans residues 1 to 23 (MAVPKKKTSKGKRNQRHAVWKAK).

It belongs to the bacterial ribosomal protein bL32 family.

The sequence is that of Large ribosomal subunit protein bL32 from Prochlorococcus marinus (strain SARG / CCMP1375 / SS120).